Reading from the N-terminus, the 177-residue chain is Nucleoside triphosphate/diphosphate phosphatase (177 aa).

R23 (proton donor) is an active-site residue. Positions 87, 103, 105, 107, 120, and 123 each coordinate Mg(2+).

Belongs to the Ntdp family. It depends on Mg(2+) as a cofactor.

The catalysed reaction is a ribonucleoside 5'-triphosphate + H2O = a ribonucleoside 5'-diphosphate + phosphate + H(+). The enzyme catalyses a ribonucleoside 5'-diphosphate + H2O = a ribonucleoside 5'-phosphate + phosphate + H(+). Functionally, has nucleoside phosphatase activity towards nucleoside triphosphates and nucleoside diphosphates. This is Nucleoside triphosphate/diphosphate phosphatase from Streptococcus equi subsp. zooepidemicus (strain MGCS10565).